Consider the following 662-residue polypeptide: Histidine decarboxylase (662 aa).

Substrate-binding residues include Tyr-88 and His-201. Lys-312 bears the N6-(pyridoxal phosphate)lysine mark. The disordered stretch occupies residues 489–518 (QPSPRAKNVIPPPPGTRGLSLESVSEGGDD).

This sequence belongs to the group II decarboxylase family. Homodimer. It depends on pyridoxal 5'-phosphate as a cofactor.

The enzyme catalyses L-histidine + H(+) = histamine + CO2. It participates in amine and polyamine biosynthesis; histamine biosynthesis; histamine from L-histidine: step 1/1. In terms of biological role, catalyzes the biosynthesis of histamine from histidine. The polypeptide is Histidine decarboxylase (Hdc) (Mus musculus (Mouse)).